The primary structure comprises 248 residues: Trypsin I-P38 (248 aa).

Positions 1-15 are cleaved as a signal peptide; it reads MKFLVLVAFLGVAVA. A propeptide spans 16–25 (activation peptide); it reads FPISDEDDDK. Residues 26–246 form the Peptidase S1 domain; sequence IVGGYSCARS…YVSWIKTTMS (221 aa). Intrachain disulfides connect cysteine 32-cysteine 162, cysteine 50-cysteine 66, cysteine 134-cysteine 235, cysteine 141-cysteine 208, cysteine 173-cysteine 187, and cysteine 198-cysteine 222. Histidine 65 serves as the catalytic Charge relay system. Residues glutamate 77, asparagine 79, and glutamate 87 each coordinate Ca(2+). Aspartate 109 serves as the catalytic Charge relay system. The active-site Charge relay system is the serine 202.

Belongs to the peptidase S1 family. Ca(2+) serves as cofactor. High levels are seen in the pancreas while lower levels are found in the liver, spleen and thymus.

It is found in the secreted. The protein resides in the extracellular space. It catalyses the reaction Preferential cleavage: Arg-|-Xaa, Lys-|-Xaa.. The protein is Trypsin I-P38 of Gallus gallus (Chicken).